A 2678-amino-acid polypeptide reads, in one-letter code: MMGTKVPSYNNKQQSGSNAGGNVNNNNNGPNINNPNNPNNTNSLPTTSGYNSSRFSVPNLDTDNFMTNIISMGVNKVGWALYRSNSNNNNNNINNNSSSSSSSNTSNNINSNTLVNDPILLAYLKTIELGVPCLWRKTRSKKPINNSSNNSNITSSTSTDSSLKNRLKNSPSETTPPNTTNNNSNNVTKDSPPNATNKMSTSPKSLSPTISNNNNNTTAAATTTTTTTNNSSNSPTSPTNNNNNNNNNNSPSSHNVVNSPPSTSSRSPPTVASVTSNTSTIQPISPIINRQTSSHNYQQPQQPYYNHQPLQPIQEYITTYELWVFNISNTSLLDFSHLNNVESGIVNLDNIGCNNSVIVQYLFKSLYNLVEYNMVSNDFIKIGNSFIKSSHILQKQKQSRNDYNNSIISGSVGSKKRLFEDFTNLYIEDDCLLSCSFSFFIYNKSIHLHFNVDKKRLKPLQELMKSEYINSPLFTSPNAFIAFFNNNNKNNINNNSNNIINNNNNSNINNNINNNNNQQQQQQQQQQQQQQQQQQQQQQQQQQQQQQQQQQQQQQQTINNNSNNISSNNDNNNTPSQMVPSIDGHDSSSSSSTPSQVTMQTTPTQEFSNNNNNNISINTTTVPITATTATATNKITTAATTTTTINNNNNKIQTESFGSTRNKKLNDEEEINFSLSSQQWKQLFNIGLANKAIIPKQQTPQQQEQQQIIGTIFKKNQLEVPKSIKTIITRGNSLPLINTFFPIELLFKFFPPISDISQYTYHEKLKEFGLEIFDKSPYALLEKGLNLFINNNNINIENNNNTSNEINNTGTQIPTKYKYVDFWSLPLFHSKESLIYGNDHFNATYCVKAVPSPSSPLTQHPSSPHSPFNNVNSPKSPQHPPSPKTPMISDDDQSLTANNEKKRHGKSQKKGRSSKRKKDDNSNNNNNNNTTTTSTITATTTTTTPTAATTGNDNFLAPQSKPPPSNIQETSQPQSLTTVQPQPPPQQQQQQQQQQQQQQQQQQQQQQQQQQQQQQQQQQQQQQQVVSSFSGQGLNSSMDLFGSDAFDTFKNKEDDLMHLSDTDIDLDLWTSHYVPPNQPTQNGSQKNNQRPLPVEDPFQVFQVPNKPATTTTTTTTTTTPTPNPTTTTTQPQTQPQQQSQQQQQPQQTNPILPTNSNLITNQKPQQYQPPLQDPFQSIDSQQPKSIQSPTLTNQPIGMVSPTLTNQPLQQYQPPPPPTQQPQQAHLKPPPPKQPSAKKNSKDGINSDENKPFLDGQFLCPVPYKAPSLSQNQLPILHLPHNTEQSPSNDDLSNPNHLHHGTPTSAISGVGGSSSSSGNNMIGSGGIVGSGGGNTNVSGSGGGMVSDPSKLTYSSEHHDPHHHHHHHHHHHPQNSQNLRNSYGNSNGVGGSQDESIDGLTTVYRNLTLSRPLGDNKNKNNAPYYCAPSYKPLDEHSLPHQLKFEYSYTPLVKPQNQLNQTKYSPFSNSHHNHHHNTTTNNNNNHNNNNNNNHPNNHHQNNNHHHLNITSSLFQPSNIQNVNSLPNIGSQKIMSISPPITPPMKGGHMIGTDINKNNNKKNNDEDENLEILSTIKQKDVNGLDSNLSSSALLSFFDQAINIKTTPPRSPVLSGYSGGGSNMNNGINGNSGFIGNGNSGFNTISSYQQNNISIEESLDLAFTIQQMTITNYDSTFGFSIDNSPLIKQSIDYYLENWLKIYTETGKVFNHHSLQFLTEESISDALDTVIDPLTTNTILETTVKTLFTFSNEIFKKIFPLSSFPLSIKEFCHLPSITLNNINNNIDLLNSQTYQNTNNSSSGGGIESQQYFSGSSGLNNSNDRNSMIPMDNSDDTSDLMSMDDHNSKNLITGTSLISTTASGAGAAITTNLINQNYEEFEWLPIPKIIVGYKEDWLEVPISTIKFWDKAQLEPYSPKKNITYFVLCPDTTAMRMHVPAFFSDLSCIYETNHLGNHVTQQQSQVQQAAAAAVAASQPTQQSSQHQSQQQQQQAAQQAAAAAAAAAAAQKNSSPFYNGIYYIPSAANTEFNPQTFINSYLLTCIQFGDYLKELSTKYSENNCMVLYIVNPFSDLSQISLSNQNQNQNQNSNSNESQQQQQQQSNNKQKQTQTNEDINHIRNSYLFMSSCFQTIVRDITCNQSLSITIQTIPIEQILFDDHPSIPVSKELAFSVFNKCRRISTISPMNFSINMNNINNMIGNNNSNSNNSSGWYYQLFNKIYEPLFILSNESSSSSSSTISTSTSASTSTSTSNTTTKNQQQQSQSQQSQQQSQQPKQLSTPTTPTTNSVSNSPSLQPQPLQTPNQLQPHQQEQKQQQQIPIIHFSYMLSDDNKWISCTIVDEQGELLENKLIPLAYSQIIGDYIWKDSFQNAWFFLTEIIGLSLSGQPCQVVIGKFGIISMQEYNDWKTTIIHFEDNLEVIKQHQQQSQSQNYSSTIDQIYKIENVIFLNLTLNNNIKSFLTEYLNDSKLSNSNNIKSVSPLSGQSFAIYPESPIMYTYNFPMNDNNDDYNSILNNNNNNILPPLSTSFVITSPSNLSGSVLTPTTTNSNVINNNQSKKEWPFTYMLSIVGIQSLQHQQQQQQQQQQQQQQQHPNIINHQELIRSITRSYHRLSYLNISPRYPDRLSILPIHFSISKRMSRTVCLISPLNPIPPPILFNRCPKLTPNSKQSPSPINSPHLNSNNT.

Disordered stretches follow at residues 1–52 (MMGT…GYNS), 140–285 (SKKP…QPIS), 495–524 (NSNNIINNNNNSNINNNINNNNNQQQQQQQ), 553–615 (QQQQ…NNNI), 852–993 (SPSS…QQQQ), 1070–1253 (TSHY…KPFL), 1278–1394 (LPHN…QDES), 1462–1502 (SPFS…NNHH), 1806–1838 (FSGSSGLNNSNDRNSMIPMDNSDDTSDLMSMDD), 2075–2105 (QNQNQNQNSNSNESQQQQQQQSNNKQKQTQT), 2225–2307 (SSSS…QEQK), and 2656–2678 (KLTPNSKQSPSPINSPHLNSNNT). Low complexity-rich tracts occupy residues 15–48 (SGSNAGGNVNNNNNGPNINNPNNPNNTNSLPTTS), 144–162 (INNSSNNSNITSSTSTDSS), and 169–186 (NSPSETTPPNTTNNNSNN). Positions 187-206 (VTKDSPPNATNKMSTSPKSL) are enriched in polar residues. Positions 207-276 (SPTISNNNNN…SPPTVASVTS (70 aa)) are enriched in low complexity. Composition is skewed to low complexity over residues 553 to 573 (QQQQTINNNSNNISSNNDNNN) and 587 to 615 (SSSSSSTPSQVTMQTTPTQEFSNNNNNNI). Positions 855-872 (SPLTQHPSSPHSPFNNVN) are enriched in polar residues. A compositionally biased stretch (basic residues) spans 901–916 (KKRHGKSQKKGRSSKR). Over residues 922 to 950 (SNNNNNNNTTTTSTITATTTTTTPTAATT) the composition is skewed to low complexity. Composition is skewed to polar residues over residues 966–979 (NIQETSQPQSLTTV) and 1079–1090 (PTQNGSQKNNQR). A compositionally biased stretch (low complexity) spans 1109 to 1150 (TTTTTTTTTTTPTPNPTTTTTQPQTQPQQQSQQQQQPQQTNP). Positions 1151–1195 (ILPTNSNLITNQKPQQYQPPLQDPFQSIDSQQPKSIQSPTLTNQP) are enriched in polar residues. Low complexity predominate over residues 1201-1211 (PTLTNQPLQQY). Residues 1281–1306 (NTEQSPSNDDLSNPNHLHHGTPTSAI) show a composition bias toward polar residues. Positions 1312 to 1321 (SSSSSGNNMI) are enriched in low complexity. Residues 1322–1343 (GSGGIVGSGGGNTNVSGSGGGM) are compositionally biased toward gly residues. The segment covering 1359-1371 (PHHHHHHHHHHHP) has biased composition (basic residues). The segment covering 1475–1497 (TTTNNNNNHNNNNNNNHPNNHHQ) has biased composition (low complexity). The segment covering 1806–1819 (FSGSSGLNNSNDRN) has biased composition (polar residues). Residues 2658–2678 (TPNSKQSPSPINSPHLNSNNT) are compositionally biased toward polar residues.

It belongs to the Mediator complex subunit 13 family. As to quaternary structure, component of the Mediator complex.

It localises to the nucleus. Its function is as follows. Component of the Mediator complex, a coactivator involved in the regulated transcription of nearly all RNA polymerase II-dependent genes. Mediator functions as a bridge to convey information from gene-specific regulatory proteins to the basal RNA polymerase II transcription machinery. Mediator is recruited to promoters by direct interactions with regulatory proteins and serves as a scaffold for the assembly of a functional preinitiation complex with RNA polymerase II and the general transcription factors. Required for the starvation-induced activation of the ACA (adenylyl cyclase) expression pathway at the growth/differentiation transition. This Dictyostelium discoideum (Social amoeba) protein is Mediator of RNA polymerase II transcription subunit 13 (amiB).